Here is a 181-residue protein sequence, read N- to C-terminus: Ribosome-recycling factor (181 aa).

Belongs to the RRF family.

The protein resides in the cytoplasm. In terms of biological role, responsible for the release of ribosomes from messenger RNA at the termination of protein biosynthesis. May increase the efficiency of translation by recycling ribosomes from one round of translation to another. In Tropheryma whipplei (strain TW08/27) (Whipple's bacillus), this protein is Ribosome-recycling factor.